Here is a 110-residue protein sequence, read N- to C-terminus: Small ribosomal subunit protein eS25 (110 aa).

The disordered stretch occupies residues 1 to 38; that stretch reads MGGKKKPTLSQLAKKAEKEKAQQAQKAKKEVKKEETPA. Residues 14 to 38 show a composition bias toward basic and acidic residues; that stretch reads KKAEKEKAQQAQKAKKEVKKEETPA.

It belongs to the eukaryotic ribosomal protein eS25 family.

This is Small ribosomal subunit protein eS25 (rps25e) from Pyrobaculum aerophilum (strain ATCC 51768 / DSM 7523 / JCM 9630 / CIP 104966 / NBRC 100827 / IM2).